The chain runs to 159 residues: MINYLKSFFLYEIVRGLTLTLKYFFKPKVTINYPYEKSPVSPRFKGEHALRRYENGEERCIACKLCEAVCPAQAIVIESDERDDGSRRTTRYDIDMTKCIYCGLCQEACPVDAIVEGPNFEFASLTHTALIYDKERLLYNGDKWEQELTNKLHKDYQYR.

4Fe-4S ferredoxin-type domains lie at 51 to 80 (RRYENGEERCIACKLCEAVCPAQAIVIESD) and 90 to 119 (TRYDIDMTKCIYCGLCQEACPVDAIVEGPN). [4Fe-4S] cluster is bound by residues cysteine 60, cysteine 63, cysteine 66, cysteine 70, cysteine 99, cysteine 102, cysteine 105, and cysteine 109.

The protein belongs to the complex I 23 kDa subunit family. As to quaternary structure, NDH-1 is composed of 14 different subunits. Subunits NuoA, H, J, K, L, M, N constitute the membrane sector of the complex. Requires [4Fe-4S] cluster as cofactor.

The protein localises to the cell inner membrane. It catalyses the reaction a quinone + NADH + 5 H(+)(in) = a quinol + NAD(+) + 4 H(+)(out). Its function is as follows. NDH-1 shuttles electrons from NADH, via FMN and iron-sulfur (Fe-S) centers, to quinones in the respiratory chain. The immediate electron acceptor for the enzyme in this species is believed to be ubiquinone. Couples the redox reaction to proton translocation (for every two electrons transferred, four hydrogen ions are translocated across the cytoplasmic membrane), and thus conserves the redox energy in a proton gradient. This Rickettsia typhi (strain ATCC VR-144 / Wilmington) protein is NADH-quinone oxidoreductase subunit I.